The primary structure comprises 98 residues: Lipolysis-activating peptide 1-alpha chain (98 aa).

The first 22 residues, 1–22, serve as a signal peptide directing secretion; that stretch reads MMKFVLFGMIVILFSLMGSIRG. One can recognise an LCN-type CS-alpha/beta domain in the interval 26 to 89; sequence PGNYPTNAYG…IWNAVKNHCT (64 aa). Intrachain disulfides connect cysteine 40–cysteine 63, cysteine 49–cysteine 68, and cysteine 53–cysteine 70. Asparagine 96 is modified (asparagine amide).

Belongs to the long (3 C-C) scorpion toxin superfamily. Monomer (edited version) and heterodimer (non-edited version) of this alpha chain and a beta chain (AC Q95P90). As to expression, expressed by the venom gland.

It is found in the secreted. Its function is as follows. The heterodimer non-edited LVP1 induces lipolysis in rat adipocytes. Induction of lipolysis by LVP1 appears to be mediated through the beta-2 adrenergic receptor pathway (ADRB2). In terms of biological role, the edited BmKBTx, similar to beta-toxins, may modulate voltage-gated sodium channels (Nav) and may block voltage-gated potassium channels (Kv). Seems to be a rare component in the venom. This is Lipolysis-activating peptide 1-alpha chain (LVP1a) from Olivierus martensii (Manchurian scorpion).